An 811-amino-acid chain; its full sequence is Glycerol-3-phosphate acyltransferase (811 aa).

The short motif at 309-314 (CHRSHM) is the HXXXXD motif element.

The protein belongs to the GPAT/DAPAT family.

The protein resides in the cell inner membrane. It catalyses the reaction sn-glycerol 3-phosphate + an acyl-CoA = a 1-acyl-sn-glycero-3-phosphate + CoA. It participates in phospholipid metabolism; CDP-diacylglycerol biosynthesis; CDP-diacylglycerol from sn-glycerol 3-phosphate: step 1/3. This chain is Glycerol-3-phosphate acyltransferase, found in Colwellia psychrerythraea (strain 34H / ATCC BAA-681) (Vibrio psychroerythus).